The sequence spans 463 residues: A-type ATP synthase subunit B (463 aa).

This sequence belongs to the ATPase alpha/beta chains family. As to quaternary structure, has multiple subunits with at least A(3), B(3), C, D, E, F, H, I and proteolipid K(x).

It is found in the cell membrane. Its function is as follows. Component of the A-type ATP synthase that produces ATP from ADP in the presence of a proton gradient across the membrane. The B chain is a regulatory subunit. The sequence is that of A-type ATP synthase subunit B from Thermococcus sp. (strain KI).